The sequence spans 429 residues: MDFSRRSFHRSLSSSSQGPALSTSGSLYRKGTMQRLGLHSVYGGWRHGTRISVSKTTMSYGNHLSNGGDLFGGNEKLAMQNLNDRLASYLEKVRSLEQSNSKLEAQIKQWYETNAPSTIRDYSSYYAQIKELQDQIKDAQIENARCVLQIDNAKLAAEDFRLKFETERGMRITVEADLQGLSKVYDDLTLQKTDLEIQIEELNKDLALLKKEHQEEVEVLRRQLGNNVNVEVDAAPGLNLGEIMNEMRQKYEILAQKNLQEAKEQFERQTQTLEKQVTVNIEELRGTEVQVTELRRSYQTLEIELQSQLSMKESLERTLEETKARYASQLAAIQEMLSSLEAQLMQIRSDTERQNQEYNILLDIKTRLEQEIATYRRLLEGEDIKTTEYQLNTLEAKDIKKTRKIKTVVEEVVDGKVVSSEVKEIEENI.

The disordered stretch occupies residues 1–26 (MDFSRRSFHRSLSSSSQGPALSTSGS). Residues 1–74 (MDFSRRSFHR…SNGGDLFGGN (74 aa)) are head. Residues 10–26 (RSLSSSSQGPALSTSGS) show a composition bias toward low complexity. Residues S13, S16, and S26 each carry the phosphoserine modification. The tract at residues 75–110 (EKLAMQNLNDRLASYLEKVRSLEQSNSKLEAQIKQW) is coil 1A. Residues 75–386 (EKLAMQNLND…RLLEGEDIKT (312 aa)) enclose the IF rod domain. The tract at residues 111-128 (YETNAPSTIRDYSSYYAQ) is linker 1. Residues 129–220 (IKELQDQIKD…KEHQEEVEVL (92 aa)) are coil 1B. The interval 221–243 (RRQLGNNVNVEVDAAPGLNLGEI) is linker 12. Residues 244–382 (MNEMRQKYEI…ATYRRLLEGE (139 aa)) form a coil 2 region. A tail region spans residues 383-429 (DIKTTEYQLNTLEAKDIKKTRKIKTVVEEVVDGKVVSSEVKEIEENI).

Belongs to the intermediate filament family. Heterotetramer of two type I and two type II keratins. Associates with KRT8. In terms of processing, hyperphosphorylation at Ser-13 occurs during the early stages of apoptosis but becomes less prominent during the later stages. Phosphorylation at Ser-13 also increases in response to stress brought on by cell injury. Proteolytically cleaved by caspases during apoptosis. Cleavage occurs at Asp-233. Expressed predominantly in the intestinal epithelium in differentiated villus cells.

In terms of biological role, plays a significant role in maintaining keratin filament organization in intestinal epithelia. When phosphorylated, plays a role in the secretion of mucin in the small intestine. The chain is Keratin, type I cytoskeletal 20 (Krt20) from Rattus norvegicus (Rat).